Consider the following 537-residue polypeptide: MVILVHCVMGQIHWTNLSTIGIIGTDSSHYKIMTRSSHQYLVLKLMPNVSIIDNCTKAELDEYEKLLNSVLEPINQALTLMTKNVKSLQSLGSGRRQRRFAGVVIAGAALGVATAAQITAGVALYQSNLNAQAIQSLRASLEQSNKAIDEVRQASQNIIIAVQGVQDYVNNEIVPALQHMSCELIGQRLGLKLLRYYTELLSVFGPSLRDPISAEISIQALSYALGGEIHKILEKLGYSGNDMVAILETKGIRAKITHVDLSGKFIVLSISYPTLSEVKGVVVHRLEAVSYNIGSQEWYTTVPRYVATNGYLISNFDESSCVFVSESAICSQNSLYPMSPILQQCLRGETASCARTLVSGTLGNKFILSKGNIIANCASILCKCHSTSKIINQSPDKLLTFIASDTCSLVEIDGVTIQVGSRQYPDVVYASKVILGPAISLERLDVGTNLGSALKKLDDAKVLIESSDQILDTVKNSYLSLGTLIALPVSIGLGLILLLLICCCKKRYQHLFSQSTKVAPVFKPDLTGTSKSYVRSL.

Residues 1 to 10 form the signal peptide; that stretch reads MVILVHCVMG. Over 11 to 483 the chain is Extracellular; sequence QIHWTNLSTI…VKNSYLSLGT (473 aa). N-linked (GlcNAc...) asparagine; by host glycosylation is found at Asn16, Asn48, and Asn54. The interval 100–124 is fusion peptide; sequence FAGVVIAGAALGVATAAQITAGVAL. Residues 125 to 153 adopt a coiled-coil conformation; the sequence is YQSNLNAQAIQSLRASLEQSNKAIDEVRQ. Intrachain disulfides connect Cys321-Cys330, Cys345-Cys353, Cys377-Cys382, and Cys384-Cys407. Residues 449 to 474 adopt a coiled-coil conformation; the sequence is NLGSALKKLDDAKVLIESSDQILDTV. A helical transmembrane segment spans residues 484–504; it reads LIALPVSIGLGLILLLLICCC. Residues 505 to 537 lie on the Cytoplasmic side of the membrane; that stretch reads KKRYQHLFSQSTKVAPVFKPDLTGTSKSYVRSL.

Belongs to the paramyxoviruses fusion glycoprotein family. As to quaternary structure, homotrimer of disulfide-linked F1-F2. In terms of processing, the inactive precursor F0 is glycosylated and proteolytically cleaved into F1 and F2 to be functionally active. The cleavage is mediated by cellular proteases during the transport and maturation of the polypeptide.

It is found in the virion membrane. It localises to the host cell membrane. Functionally, class I viral fusion protein. Under the current model, the protein has at least 3 conformational states: pre-fusion native state, pre-hairpin intermediate state, and post-fusion hairpin state. During viral and plasma cell membrane fusion, the heptad repeat (HR) regions assume a trimer-of-hairpins structure, positioning the fusion peptide in close proximity to the C-terminal region of the ectodomain. The formation of this structure appears to drive apposition and subsequent fusion of viral and plasma cell membranes. Directs fusion of viral and cellular membranes leading to delivery of the nucleocapsid into the cytoplasm. This fusion is pH independent and occurs directly at the outer cell membrane. The trimer of F1-F2 (F protein) probably interacts with H at the virion surface. Upon HN binding to its cellular receptor, the hydrophobic fusion peptide is unmasked and interacts with the cellular membrane, inducing the fusion between cell and virion membranes. Later in infection, F proteins expressed at the plasma membrane of infected cells could mediate fusion with adjacent cells to form syncytia, a cytopathic effect that could lead to tissue necrosis. The polypeptide is Fusion glycoprotein F0 (F) (Phocine distemper virus (PDV)).